Consider the following 423-residue polypeptide: UPF0597 protein TTE0269 (423 aa).

This sequence belongs to the UPF0597 family.

This chain is UPF0597 protein TTE0269, found in Caldanaerobacter subterraneus subsp. tengcongensis (strain DSM 15242 / JCM 11007 / NBRC 100824 / MB4) (Thermoanaerobacter tengcongensis).